We begin with the raw amino-acid sequence, 522 residues long: MALTEGISELLLSKPVVLGLAACALLFLIGRAFEPTVDALEPPMLRPSIPIFGHFYSMMKDQEAFFKRLDKKYHMPIATVPILKYKMYAITDPILVQSAYCNKNLSFTPFAINGAQKVTGFDDDYHKVLMETNVLPEYFKSLYDGTTAQHIHQLNVTSLKHVSQHINSIQENGMTIDNTYLWLRNLMTVATCEALYGPDNPIRSDSLVEDIWTFETGLAYLFFHIFNSKTLQRTKEARRRIQLALGKWCTNMRQDDERVSAYIRNRVGILRNYGVEGQKLGDIEVGLIHVPTSNSIPTLFWFFMHVFTRPDVVEQMRAEVEHIVQRGPDETVTVNIDDILERCPLMISAYREASRLCNGFTCNRIVMEETTITDRHGRSYLLKKGSSVKMPAGVMHASQEVWGEDAAVFRADRFLDKGLTSEQAKLRRAALTPFGGGAHMCPGRNFATAEIYGFMTALLLGYNVEPVDGKWDAFKPPPMATCPQSTSVCKPEDEASVCGTRLIRRSGWEGAQWKFVSGKVTE.

The chain crosses the membrane as a helical span at residues 10–30 (LLLSKPVVLGLAACALLFLIG). Asn-104 and Asn-155 each carry an N-linked (GlcNAc...) asparagine glycan. Cys-441 contributes to the heme binding site.

Belongs to the cytochrome P450 family. The cofactor is heme.

It localises to the membrane. The protein operates within secondary metabolite biosynthesis. Cytochrome P450 monooxygenase; part of the gene cluster that mediates the biosynthesis of the lipopeptide fusaristatin A. Fusaristatin A consists of a polyketide chain linked to three amino acid residues glutamine (Gln), dehydroalanine (dehydro-Ala), and beta-aminoisobutyric acid. The biosynthesis starts with formation of a linear polyketide chain by the highly reducing polyketide synthase PKS6. The gene cluster does not contain an acyl-CoA ligase or an acyl-transferase, and it is therefore predicted that the polyketide is transferred directly to the nonribosomal peptide synthetase NRPS7. Modules 1-3 from NRPS7 incorporate dehydro-Ala, Gln, and beta-aminoisobutyric acid in the compound, which is released by cyclization. The beta-aminoisobutyric acid units are most likely not freely available to the NRPS, but can be synthesized from thymine, which requires a dehydrogenase, a monooxygenase, and an aminotransferase. The fusaristatin A cluster contains a cytochrome P450 monooxygenase (FGSG_08207) and an aminotransferase (FGSG_17085), which theoretically can perform two of the enzymatic steps. The enzymes may however also be involved in biosynthesis of dehydroalanine or modification of the polyketide. The dehydro-Ala residue can be a result of cyclization, where serine is dehydrated. The last gene of the cluster encodes a protein with an A/B barrel domain found in variable enzymes, which hampers functional prediction. This chain is Cytochrome P450 monooxygenase FGSG_08207, found in Gibberella zeae (strain ATCC MYA-4620 / CBS 123657 / FGSC 9075 / NRRL 31084 / PH-1) (Wheat head blight fungus).